The chain runs to 433 residues: Trigger factor (433 aa).

A PPIase FKBP-type domain is found at 161–246; the sequence is EDRVVIDFVG…LKKVENIVLP (86 aa).

It belongs to the FKBP-type PPIase family. Tig subfamily.

The protein resides in the cytoplasm. The enzyme catalyses [protein]-peptidylproline (omega=180) = [protein]-peptidylproline (omega=0). Involved in protein export. Acts as a chaperone by maintaining the newly synthesized protein in an open conformation. Functions as a peptidyl-prolyl cis-trans isomerase. This is Trigger factor from Actinobacillus pleuropneumoniae serotype 7 (strain AP76).